The following is a 190-amino-acid chain: Elongation factor P 2 (190 aa).

Belongs to the elongation factor P family.

The protein resides in the cytoplasm. The protein operates within protein biosynthesis; polypeptide chain elongation. Its function is as follows. Involved in peptide bond synthesis. Stimulates efficient translation and peptide-bond synthesis on native or reconstituted 70S ribosomes in vitro. Probably functions indirectly by altering the affinity of the ribosome for aminoacyl-tRNA, thus increasing their reactivity as acceptors for peptidyl transferase. This is Elongation factor P 2 (efp2) from Chlamydia trachomatis serovar D (strain ATCC VR-885 / DSM 19411 / UW-3/Cx).